The chain runs to 302 residues: Tritrans,polycis-undecaprenyl-diphosphate synthase (geranylgeranyl-diphosphate specific) (302 aa).

Asp-33 is a catalytic residue. Asp-33 serves as a coordination point for Mg(2+). Substrate contacts are provided by residues 34–37 (GNRR) and 78–80 (STE). Residue Asn-81 is the Proton acceptor of the active site. Substrate contacts are provided by residues Phe-82, Arg-84, Arg-203, and 209–211 (RTS).

This sequence belongs to the UPP synthase family. In terms of assembly, homodimer. Mg(2+) is required as a cofactor.

It catalyses the reaction geranylgeranyl diphosphate + 7 isopentenyl diphosphate = tri-trans,hepta-cis-undecaprenyl diphosphate + 7 diphosphate. Functionally, catalyzes the sequential condensation of isopentenyl diphosphate (IPP) with geranylgeranyl diphosphate (GGPP) to yield (2Z,6Z,10Z,14Z,18Z,22Z,26Z,30E,34E,38E)-undecaprenyl diphosphate (tritrans,heptacis-UPP). It is probably the precursor of glycosyl carrier lipids. The chain is Tritrans,polycis-undecaprenyl-diphosphate synthase (geranylgeranyl-diphosphate specific) from Halobacterium salinarum (strain ATCC 700922 / JCM 11081 / NRC-1) (Halobacterium halobium).